Here is a 216-residue protein sequence, read N- to C-terminus: SPbeta prophage-derived uncharacterized protein YomX (216 aa).

This chain is SPbeta prophage-derived uncharacterized protein YomX (yomX), found in Bacillus subtilis (strain 168).